Reading from the N-terminus, the 484-residue chain is Ribosome biogenesis protein YTM1 (484 aa).

The interval 13-95 (VKVTFTTTEA…ESNLTLQYVR (83 aa)) is ubiquitin-like (UBL) domain. WD repeat units lie at residues 122–161 (SPSG…IATS), 168–206 (GHTA…HFSG), 216–255 (GHTG…APEA), 288–328 (IHSA…VVTT), 330–373 (STSH…ATTS), 379–419 (GHAN…PATQ), and 448–484 (GEGC…VVAE).

This sequence belongs to the WD repeat WDR12/YTM1 family. As to quaternary structure, component of the NOP7 complex, composed of ERB1, NOP7 and YTM1. The complex is held together by ERB1, which interacts with NOP7 via its N-terminal domain and with YTM1 via a high-affinity interaction between the seven-bladed beta-propeller domains of the 2 proteins. The NOP7 complex associates with the 66S pre-ribosome. Interacts (via UBL domain) with MDN1 (via VWFA/MIDAS domain).

Its subcellular location is the nucleus. It localises to the nucleolus. It is found in the nucleoplasm. Functionally, component of the NOP7 complex, which is required for maturation of the 25S and 5.8S ribosomal RNAs and formation of the 60S ribosome. The sequence is that of Ribosome biogenesis protein YTM1 from Chaetomium globosum (strain ATCC 6205 / CBS 148.51 / DSM 1962 / NBRC 6347 / NRRL 1970) (Soil fungus).